The following is an 86-amino-acid chain: Small ribosomal subunit protein bS16 (86 aa).

This sequence belongs to the bacterial ribosomal protein bS16 family.

The protein is Small ribosomal subunit protein bS16 of Methylacidiphilum infernorum (isolate V4) (Methylokorus infernorum (strain V4)).